Consider the following 426-residue polypeptide: MSITPSLSRRTVMSLLAAGLSPAFAQFRVEVSGVGLTQLPIAIASFRGEVQAPQKIGNIVRADLERSGMFRPVDTAGIVADENTRPDLAIWRQKGADAMVTGSVSPLADGRFDVRLRLWDIVRGQDLGGQSYTVAQADLRLSAHRISDFVYEKLTGEKGIFSTRIAYVTKTAQRFNLWVADSDGEGAQSALTSPEPIISPSWSPNGSQLAYVSFESRKPVIYAHDVATGKRRLLANFRGSNSAPAWSPDGKQLVATLSRDGGSQIYALGLSGGDPKRLTQSSSIDTEPAYSPDGRYIYFVSDRGGAPQIYRMSPGGGNPERVTFTGGYNISPAISPDGRWLAYVSRVGGAFKLHVMELASGTATPITDTTADESPSFAPNSRLIVYATQQQGREALMTTTLDGKIKARLSGAGGDIREPDWGPFQR.

A signal peptide spans 1–25 (MSITPSLSRRTVMSLLAAGLSPAFA).

This sequence belongs to the TolB family. As to quaternary structure, the Tol-Pal system is composed of five core proteins: the inner membrane proteins TolA, TolQ and TolR, the periplasmic protein TolB and the outer membrane protein Pal. They form a network linking the inner and outer membranes and the peptidoglycan layer.

The protein resides in the periplasm. In terms of biological role, part of the Tol-Pal system, which plays a role in outer membrane invagination during cell division and is important for maintaining outer membrane integrity. The chain is Tol-Pal system protein TolB from Polaromonas sp. (strain JS666 / ATCC BAA-500).